A 226-amino-acid polypeptide reads, in one-letter code: 2-C-methyl-D-erythritol 4-phosphate cytidylyltransferase (226 aa).

It belongs to the IspD/TarI cytidylyltransferase family. IspD subfamily.

It catalyses the reaction 2-C-methyl-D-erythritol 4-phosphate + CTP + H(+) = 4-CDP-2-C-methyl-D-erythritol + diphosphate. Its pathway is isoprenoid biosynthesis; isopentenyl diphosphate biosynthesis via DXP pathway; isopentenyl diphosphate from 1-deoxy-D-xylulose 5-phosphate: step 2/6. Functionally, catalyzes the formation of 4-diphosphocytidyl-2-C-methyl-D-erythritol from CTP and 2-C-methyl-D-erythritol 4-phosphate (MEP). In Prochlorococcus marinus (strain MIT 9312), this protein is 2-C-methyl-D-erythritol 4-phosphate cytidylyltransferase.